Reading from the N-terminus, the 172-residue chain is ATP synthase subunit b (172 aa).

A helical transmembrane segment spans residues 12–32 (VGFNAGTMLFQLVAMLILLAL).

This sequence belongs to the ATPase B chain family. In terms of assembly, F-type ATPases have 2 components, F(1) - the catalytic core - and F(0) - the membrane proton channel. F(1) has five subunits: alpha(3), beta(3), gamma(1), delta(1), epsilon(1). F(0) has three main subunits: a(1), b(2) and c(10-14). The alpha and beta chains form an alternating ring which encloses part of the gamma chain. F(1) is attached to F(0) by a central stalk formed by the gamma and epsilon chains, while a peripheral stalk is formed by the delta and b chains.

It is found in the cell membrane. F(1)F(0) ATP synthase produces ATP from ADP in the presence of a proton or sodium gradient. F-type ATPases consist of two structural domains, F(1) containing the extramembraneous catalytic core and F(0) containing the membrane proton channel, linked together by a central stalk and a peripheral stalk. During catalysis, ATP synthesis in the catalytic domain of F(1) is coupled via a rotary mechanism of the central stalk subunits to proton translocation. In terms of biological role, component of the F(0) channel, it forms part of the peripheral stalk, linking F(1) to F(0). This chain is ATP synthase subunit b, found in Bacillus licheniformis (strain ATCC 14580 / DSM 13 / JCM 2505 / CCUG 7422 / NBRC 12200 / NCIMB 9375 / NCTC 10341 / NRRL NRS-1264 / Gibson 46).